A 122-amino-acid polypeptide reads, in one-letter code: Flagellar protein FliT (122 aa).

The tract at residues 1-50 (MTSTVEFINRWQRIALLSQSLLELAQRGEWDLLLQQEVSYLQSIETVMEK) is required for homodimerization. Residues 60–98 (IQDMVAGYIKQTLDNEQLLKGLLQQRLDELSSLIGQSTR) are fliD binding.

This sequence belongs to the FliT family. In terms of assembly, homodimer. Interacts with FliD and FlhC.

The protein localises to the cytoplasm. It localises to the cytosol. Functionally, dual-function protein that regulates the transcription of class 2 flagellar operons and that also acts as an export chaperone for the filament-capping protein FliD. As a transcriptional regulator, acts as an anti-FlhDC factor; it directly binds FlhC, thus inhibiting the binding of the FlhC/FlhD complex to class 2 promoters, resulting in decreased expression of class 2 flagellar operons. As a chaperone, effects FliD transition to the membrane by preventing its premature polymerization, and by directing it to the export apparatus. In Salmonella gallinarum (strain 287/91 / NCTC 13346), this protein is Flagellar protein FliT.